Consider the following 336-residue polypeptide: Nicotinate-nucleotide--dimethylbenzimidazole phosphoribosyltransferase (336 aa).

Glu304 functions as the Proton acceptor in the catalytic mechanism.

This sequence belongs to the CobT family.

The catalysed reaction is 5,6-dimethylbenzimidazole + nicotinate beta-D-ribonucleotide = alpha-ribazole 5'-phosphate + nicotinate + H(+). Its pathway is nucleoside biosynthesis; alpha-ribazole biosynthesis; alpha-ribazole from 5,6-dimethylbenzimidazole: step 1/2. In terms of biological role, catalyzes the synthesis of alpha-ribazole-5'-phosphate from nicotinate mononucleotide (NAMN) and 5,6-dimethylbenzimidazole (DMB). In Mesorhizobium japonicum (strain LMG 29417 / CECT 9101 / MAFF 303099) (Mesorhizobium loti (strain MAFF 303099)), this protein is Nicotinate-nucleotide--dimethylbenzimidazole phosphoribosyltransferase.